The chain runs to 582 residues: Formate--tetrahydrofolate ligase (582 aa).

Threonine 65 to threonine 72 contacts ATP.

Belongs to the formate--tetrahydrofolate ligase family.

It catalyses the reaction (6S)-5,6,7,8-tetrahydrofolate + formate + ATP = (6R)-10-formyltetrahydrofolate + ADP + phosphate. It functions in the pathway one-carbon metabolism; tetrahydrofolate interconversion. In Vibrio cholerae serotype O1 (strain ATCC 39315 / El Tor Inaba N16961), this protein is Formate--tetrahydrofolate ligase.